The primary structure comprises 320 residues: uncharacterized protein (320 aa).

The stretch at 1 to 26 (MNHYDQYQKYKKKYLDLKNQLNNSSQ) forms a coiled coil.

The protein localises to the virion. This is an uncharacterized protein from Acanthamoeba polyphaga mimivirus (APMV).